The sequence spans 185 residues: Small ribosomal subunit protein uS4c (185 aa).

The region spanning 72–134 (MRLDNVIFRL…PTSCNALKGE (63 aa)) is the S4 RNA-binding domain. The disordered stretch occupies residues 132–154 (KGESPGGGETPDHLTASLSEGSR).

This sequence belongs to the universal ribosomal protein uS4 family. In terms of assembly, part of the 30S ribosomal subunit. Contacts protein S5. The interaction surface between S4 and S5 is involved in control of translational fidelity.

It is found in the plastid. The protein resides in the chloroplast. Functionally, one of the primary rRNA binding proteins, it binds directly to 16S rRNA where it nucleates assembly of the body of the 30S subunit. With S5 and S12 plays an important role in translational accuracy. In Woodwardia radicans (Rooting chainfern), this protein is Small ribosomal subunit protein uS4c (rps4).